A 257-amino-acid polypeptide reads, in one-letter code: Pyridoxine 5'-phosphate synthase (257 aa).

Asn6 is a binding site for 3-amino-2-oxopropyl phosphate. 8 to 9 (DH) provides a ligand contact to 1-deoxy-D-xylulose 5-phosphate. A 3-amino-2-oxopropyl phosphate-binding site is contributed by Arg17. The active-site Proton acceptor is His41. 1-deoxy-D-xylulose 5-phosphate is bound by residues Arg43 and His48. The Proton acceptor role is filled by Glu68. Residue Thr98 coordinates 1-deoxy-D-xylulose 5-phosphate. The Proton donor role is filled by His210. Residues Gly211 and 232-233 (GQ) each bind 3-amino-2-oxopropyl phosphate.

The protein belongs to the PNP synthase family. In terms of assembly, homooctamer; tetramer of dimers.

The protein localises to the cytoplasm. The enzyme catalyses 3-amino-2-oxopropyl phosphate + 1-deoxy-D-xylulose 5-phosphate = pyridoxine 5'-phosphate + phosphate + 2 H2O + H(+). Its pathway is cofactor biosynthesis; pyridoxine 5'-phosphate biosynthesis; pyridoxine 5'-phosphate from D-erythrose 4-phosphate: step 5/5. Its function is as follows. Catalyzes the complicated ring closure reaction between the two acyclic compounds 1-deoxy-D-xylulose-5-phosphate (DXP) and 3-amino-2-oxopropyl phosphate (1-amino-acetone-3-phosphate or AAP) to form pyridoxine 5'-phosphate (PNP) and inorganic phosphate. This is Pyridoxine 5'-phosphate synthase from Campylobacter jejuni subsp. jejuni serotype O:2 (strain ATCC 700819 / NCTC 11168).